Consider the following 491-residue polypeptide: CTD small phosphatase-like protein 1 (491 aa).

4 disordered regions span residues methionine 1–tyrosine 53, lysine 140–arginine 198, lysine 221–proline 249, and threonine 261–threonine 282. Positions valine 17–proline 26 are enriched in pro residues. Residues serine 37–asparagine 49 show a composition bias toward polar residues. A compositionally biased stretch (basic and acidic residues) spans leucine 141–glycine 156. Residues alanine 176–alanine 187 are compositionally biased toward polar residues. The span at glutamine 223–asparagine 237 shows a compositional bias: low complexity. 2 stretches are compositionally biased toward polar residues: residues glycine 238–proline 249 and glycine 264–glycine 276. Residues glutamine 307–leucine 465 form the FCP1 homology domain. The active-site 4-aspartylphosphate intermediate is aspartate 317. Residues aspartate 317, aspartate 319, and asparagine 428 each contribute to the Mg(2+) site. The active-site Proton donor is aspartate 319.

In terms of assembly, may interact (via phosphatase domain) with cpna-1. Isoform a and isoform b may interact with lim-9 (via LIM zinc-binding domain). Isoform a and isoform b may interact (via FCP1 homology domain) with unc-89 (via fibronectin type-III domain 1, Ig-like C2-type domain 48/49 and protein kinase domain 1 or Ig-like C2-type domain 50, fibronectin type-III domain 2 and protein kinase domain 2); the interaction may act as a molecular bridge to bring two unc-89 molecules together or to stabilize a loop between the 2 protein kinase domains. Mg(2+) serves as cofactor. In terms of tissue distribution, expressed in pharyngeal, vulval and body wall muscles.

It is found in the cytoplasm. The protein resides in the myofibril. It localises to the sarcomere. Its subcellular location is the m line. It catalyses the reaction O-phospho-L-seryl-[protein] + H2O = L-seryl-[protein] + phosphate. The enzyme catalyses O-phospho-L-threonyl-[protein] + H2O = L-threonyl-[protein] + phosphate. With respect to regulation, inhibited by beryllium trifluoride (BeF(3-)) and tetrafluoroaluminate (AlF(4-)) but not by sodium fluoride (NaF) or sodium orthovanadate (Na3VO4). In terms of biological role, phosphatase which may play a role in the egg laying muscles. The sequence is that of CTD small phosphatase-like protein 1 from Caenorhabditis elegans.